The sequence spans 281 residues: MATVTAALVKELRERTAAGMMECKKALVAAEGDIELAIENMRKSGAAKAAKKAGNVAAEGAIIIKEEAGVAALLEVNCQTDFVAKDAGFLAFANEVAEVALAERLDIVALQAKFEDARIALVTKIGENISIRRVELVEGVALASYRHGEKIGVVVAGEGEAETLKHIAMHVAASKPEYVNPSDVPADVVEKEKAVQVEIAMNEGKPQEIAEKMVIGRMKKFTGEVSLTGQAFIMEPKKTVADILKEKGASVTTFVRLEVGEGIEKAAEMSFADEVAAVQKG.

Positions 80–83 (TDFV) are involved in Mg(2+) ion dislocation from EF-Tu.

The protein belongs to the EF-Ts family.

It is found in the cytoplasm. Functionally, associates with the EF-Tu.GDP complex and induces the exchange of GDP to GTP. It remains bound to the aminoacyl-tRNA.EF-Tu.GTP complex up to the GTP hydrolysis stage on the ribosome. The sequence is that of Elongation factor Ts from Vibrio atlanticus (strain LGP32) (Vibrio splendidus (strain Mel32)).